Here is a 104-residue protein sequence, read N- to C-terminus: Cytochrome c6 (104 aa).

An N-terminal signal peptide occupies residues 1–20 (MKSLLTFILTTIFCIQQVWA). Heme c-binding residues include C34, C37, H38, and M78.

This sequence belongs to the cytochrome c family. PetJ subfamily. As to quaternary structure, monomer. Binds 1 heme c group covalently per subunit.

It is found in the plastid. The protein resides in the chloroplast thylakoid lumen. Its function is as follows. Functions as an electron carrier between membrane-bound cytochrome b6-f and photosystem I in oxygenic photosynthesis. The polypeptide is Cytochrome c6 (Cyanidioschyzon merolae (strain NIES-3377 / 10D) (Unicellular red alga)).